A 346-amino-acid polypeptide reads, in one-letter code: Flap endonuclease 1 (346 aa).

The N-domain stretch occupies residues 1–102 (MGVTELGKLI…LEIEQRKKAK (102 aa)). Mg(2+)-binding residues include Asp-31, Asp-84, Glu-156, Glu-158, Asp-177, Asp-179, and Asp-239. Residues 120-261 (DVAKYAKRAI…KALKLIWEFG (142 aa)) form an I-domain region.

The protein belongs to the XPG/RAD2 endonuclease family. FEN1 subfamily. As to quaternary structure, interacts with PCNA. PCNA stimulates the nuclease activity without altering cleavage specificity. Requires Mg(2+) as cofactor.

Its function is as follows. Structure-specific nuclease with 5'-flap endonuclease and 5'-3' exonuclease activities involved in DNA replication and repair. During DNA replication, cleaves the 5'-overhanging flap structure that is generated by displacement synthesis when DNA polymerase encounters the 5'-end of a downstream Okazaki fragment. Binds the unpaired 3'-DNA end and kinks the DNA to facilitate 5' cleavage specificity. Cleaves one nucleotide into the double-stranded DNA from the junction in flap DNA, leaving a nick for ligation. Also involved in the base excision repair (BER) pathway. Acts as a genome stabilization factor that prevents flaps from equilibrating into structures that lead to duplications and deletions. Also possesses 5'-3' exonuclease activity on nicked or gapped double-stranded DNA. This Pyrobaculum calidifontis (strain DSM 21063 / JCM 11548 / VA1) protein is Flap endonuclease 1.